Here is a 453-residue protein sequence, read N- to C-terminus: Nuclear distribution protein nudF-2 (453 aa).

The LisH domain occupies 9-41 (QADELHRALIAYLTAANLPNTAAALREELNLSE). A coiled-coil region spans residues 62–88 (SVVRLQKKIMDLESRNHILQSELDNAT). The segment at 84-107 (LDNATPTSRQNKDPVAWLPRAPPR) is disordered. 7 WD repeats span residues 112-153 (SHRD…RTIK), 155-195 (HTKA…KNIR), 199-239 (GHDH…CVKT), 242-281 (GHAE…PEPK), 286-345 (GHEH…IKTL), 347-386 (GHDN…KCVK), and 391-449 (AHGH…LNVR).

Belongs to the WD repeat LIS1/nudF family. As to quaternary structure, self-associates. Interacts with ro-11/nde1 and dynein.

The protein localises to the cytoplasm. The protein resides in the cytoskeleton. Its subcellular location is the spindle pole. In terms of biological role, positively regulates the activity of the minus-end directed microtubule motor protein dynein. May enhance dynein-mediated microtubule sliding by targeting dynein to the microtubule plus end. Required for nuclear migration during vegetative growth as well as development. Required for retrograde early endosome (EE) transport from the hyphal tip. Required for localization of dynein to the mitotic spindle poles. Recruits additional proteins to the dynein complex at SPBs. In Neurospora crassa (strain ATCC 24698 / 74-OR23-1A / CBS 708.71 / DSM 1257 / FGSC 987), this protein is Nuclear distribution protein nudF-2 (nmp-1).